Here is a 348-residue protein sequence, read N- to C-terminus: Phosphoribosylformylglycinamidine cyclo-ligase (348 aa).

Belongs to the AIR synthase family.

It is found in the cytoplasm. The catalysed reaction is 2-formamido-N(1)-(5-O-phospho-beta-D-ribosyl)acetamidine + ATP = 5-amino-1-(5-phospho-beta-D-ribosyl)imidazole + ADP + phosphate + H(+). It participates in purine metabolism; IMP biosynthesis via de novo pathway; 5-amino-1-(5-phospho-D-ribosyl)imidazole from N(2)-formyl-N(1)-(5-phospho-D-ribosyl)glycinamide: step 2/2. This chain is Phosphoribosylformylglycinamidine cyclo-ligase, found in Geobacter sp. (strain M21).